The sequence spans 485 residues: Eukaryotic translation initiation factor 3 subunit E (485 aa).

Residues 219–391 (NQPDGPDGIV…GEIHITKPVT (173 aa)) form the PCI domain. The tract at residues 444 to 485 (QGGGKSNKKGDYKKGDYKKGGDFKKGGDFKKGGDHKKRAWVK) is disordered. Positions 451–475 (KKGDYKKGDYKKGGDFKKGGDFKKG) are enriched in basic and acidic residues. A compositionally biased stretch (basic residues) spans 476-485 (GDHKKRAWVK).

The protein belongs to the eIF-3 subunit E family. In terms of assembly, component of the eukaryotic translation initiation factor 3 (eIF-3) complex.

The protein resides in the cytoplasm. Component of the eukaryotic translation initiation factor 3 (eIF-3) complex, which is involved in protein synthesis of a specialized repertoire of mRNAs and, together with other initiation factors, stimulates binding of mRNA and methionyl-tRNAi to the 40S ribosome. The eIF-3 complex specifically targets and initiates translation of a subset of mRNAs involved in cell proliferation. The chain is Eukaryotic translation initiation factor 3 subunit E from Monosiga brevicollis (Choanoflagellate).